Here is a 226-residue protein sequence, read N- to C-terminus: MPEDSNKASNTARVVFYTSILTGGILSSFYVYSRYFRRFTCTAEVPKKIYRGRTLFGRVTSVGDGDNFHFYHTPGGRLAGWGWLRPYPETNKRGLGKETLHIRLYGVDAPERPHFGRQGQPYGDEALEWLRSYILGRNVRVKLFSPDQYGRIVGGAKVWKLTGRKDVSTEMLKNGWGVKYEGKMGAEFNGKGKLFQKLEDHARKKKIGMFQQKGKIVTPGQYKKDE.

Residues 15–32 (VFYTSILTGGILSSFYVY) traverse the membrane as a helical segment. The region spanning 53-212 (RTLFGRVTSV…RKKKIGMFQQ (160 aa)) is the TNase-like domain. R103 is an active-site residue. D108 contributes to the Ca(2+) binding site. Active-site residues include E111 and R151.

The protein belongs to the LCL3 family.

Its subcellular location is the mitochondrion. It localises to the membrane. This chain is Probable endonuclease LCL3 (LCL3), found in Yarrowia lipolytica (strain CLIB 122 / E 150) (Yeast).